We begin with the raw amino-acid sequence, 368 residues long: E3 ubiquitin-protein ligase makorin (368 aa).

2 consecutive C3H1-type zinc fingers follow at residues 2–29 (STKR…HDWN) and 30–57 (DQPN…HVKV). The tract at residues 58-81 (SRNPTVAPPPSSSTTTRASSSLQP) is disordered. The span at 69–78 (SSTTTRASSS) shows a compositional bias: low complexity. Residues 147-174 (PADLPICSFAAGGNCPYGEECPQMHGDL) form a C3H1-type 3 zinc finger. Residues 175-202 (CTTCGKMCLHPYRPDEREEHTKLCEKNH) form a makorin-type Cys-His region. Residues 216–274 (CSVCLDRVLSKPTAAERKFGLLSECDHPFCISCIRNWRNNSPTSGMDVNSALRACPICR) form an RING-type zinc finger. The segment at 303-332 (KLKSIDCKYFDFGTGTCPFGSSCFYKHAYR) adopts a C3H1-type 4 zinc-finger fold.

Expressed in primary roots and leaves. Detected in vascular bundle tissues.

The catalysed reaction is S-ubiquitinyl-[E2 ubiquitin-conjugating enzyme]-L-cysteine + [acceptor protein]-L-lysine = [E2 ubiquitin-conjugating enzyme]-L-cysteine + N(6)-ubiquitinyl-[acceptor protein]-L-lysine.. It functions in the pathway protein modification; protein ubiquitination. Its function is as follows. E3 ubiquitin ligase catalyzing the covalent attachment of ubiquitin moieties onto substrate proteins. This is E3 ubiquitin-protein ligase makorin (MKRN) from Oryza sativa subsp. japonica (Rice).